A 1201-amino-acid chain; its full sequence is DNA-directed RNA polymerase subunit beta' (1201 aa).

Cysteine 60, cysteine 62, cysteine 75, and cysteine 78 together coordinate Zn(2+). Residues aspartate 449, aspartate 451, and aspartate 453 each contribute to the Mg(2+) site. Positions 818, 892, 899, and 902 each coordinate Zn(2+).

Belongs to the RNA polymerase beta' chain family. In terms of assembly, the RNAP catalytic core consists of 2 alpha, 1 beta, 1 beta' and 1 omega subunit. When a sigma factor is associated with the core the holoenzyme is formed, which can initiate transcription. Mg(2+) serves as cofactor. The cofactor is Zn(2+).

The catalysed reaction is RNA(n) + a ribonucleoside 5'-triphosphate = RNA(n+1) + diphosphate. Its function is as follows. DNA-dependent RNA polymerase catalyzes the transcription of DNA into RNA using the four ribonucleoside triphosphates as substrates. This Listeria monocytogenes serotype 4b (strain F2365) protein is DNA-directed RNA polymerase subunit beta'.